A 361-amino-acid chain; its full sequence is Lipoyl synthase 1, chloroplastic (361 aa).

The [4Fe-4S] cluster site is built by C87, C92, C98, C124, C128, C131, and S339. Residues G107–R328 form the Radical SAM core domain.

This sequence belongs to the radical SAM superfamily. Lipoyl synthase family. It depends on [4Fe-4S] cluster as a cofactor.

It localises to the plastid. The protein localises to the chloroplast. The catalysed reaction is [[Fe-S] cluster scaffold protein carrying a second [4Fe-4S](2+) cluster] + N(6)-octanoyl-L-lysyl-[protein] + 2 oxidized [2Fe-2S]-[ferredoxin] + 2 S-adenosyl-L-methionine + 4 H(+) = [[Fe-S] cluster scaffold protein] + N(6)-[(R)-dihydrolipoyl]-L-lysyl-[protein] + 4 Fe(3+) + 2 hydrogen sulfide + 2 5'-deoxyadenosine + 2 L-methionine + 2 reduced [2Fe-2S]-[ferredoxin]. It participates in protein modification; protein lipoylation via endogenous pathway; protein N(6)-(lipoyl)lysine from octanoyl-[acyl-carrier-protein]: step 2/2. Functionally, catalyzes the radical-mediated insertion of two sulfur atoms into the C-6 and C-8 positions of the octanoyl moiety bound to the lipoyl domains of lipoate-dependent enzymes, thereby converting the octanoylated domains into lipoylated derivatives. This Zea mays (Maize) protein is Lipoyl synthase 1, chloroplastic.